Here is a 137-residue protein sequence, read N- to C-terminus: Large ribosomal subunit protein uL22c (137 aa).

It belongs to the universal ribosomal protein uL22 family. As to quaternary structure, part of the 50S ribosomal subunit.

The protein localises to the plastid. It localises to the chloroplast. Its function is as follows. This protein binds specifically to 23S rRNA. In terms of biological role, the globular domain of the protein is located near the polypeptide exit tunnel on the outside of the subunit, while an extended beta-hairpin is found that lines the wall of the exit tunnel in the center of the 70S ribosome. This is Large ribosomal subunit protein uL22c (rpl22) from Oenothera argillicola (Appalachian evening primrose).